A 177-amino-acid chain; its full sequence is Large ribosomal subunit protein uL6 (177 aa).

This sequence belongs to the universal ribosomal protein uL6 family. Part of the 50S ribosomal subunit.

Functionally, this protein binds to the 23S rRNA, and is important in its secondary structure. It is located near the subunit interface in the base of the L7/L12 stalk, and near the tRNA binding site of the peptidyltransferase center. In Beijerinckia indica subsp. indica (strain ATCC 9039 / DSM 1715 / NCIMB 8712), this protein is Large ribosomal subunit protein uL6.